Consider the following 239-residue polypeptide: Immunoglobulin superfamily member 23 (239 aa).

The segment at 63–93 is disordered; sequence ELEAQPPTSSSPKGLPGRPRTSQEVPNAEDN. The Ig-like domain occupies 94–179; that stretch reads PSLIPLVTFP…ELVSEPVTVS (86 aa). Residues 214-234 traverse the membrane as a helical segment; sequence LIVAATIGGLVLIGSVCFYIL.

It is found in the cell membrane. In terms of biological role, may be involved in osteoclast differentiation. The sequence is that of Immunoglobulin superfamily member 23 from Mus musculus (Mouse).